A 451-amino-acid polypeptide reads, in one-letter code: MNKKILFLGVGGIGVSALAIAAKRLGAHVAGYDSVANKLTAKLEALGIVIFTSPNGVDVANFDIVVYSSAILSSHPLLSQARSLGIQCLQRAMFLSVLMKDFSYSIAITGTHGKTTTSSVLATLLCQLDKYSSFIVGGVVKYADSNIQVNGTDKLVIEADESDASFLFLSPQVVIITNIDLDHMATYNNSYQTLLENFTDFVSKESVKSIYLCVDDQGCRDLLAKYNQSDKNVTSYGFSIDADVQIYDYHIIDEITHFKIRYKGDDLSFKLQLPGRYNVQNATACIIACLDLGFKYEDIRNALIKVTGVARRFDLYTKVISGHQVTVIDDYGHHPVEVANSISAVRDRYPNKKIIHVFQPHRYTRNRDLIKDWPKALSLADQLILLPTYSADEQIIKGAESQDIVKGLSGYLLADGFDHAIYFLEKLANENTVILIQGAGDVTNLVEILSE.

110–116 (GTHGKTT) lines the ATP pocket.

The protein belongs to the MurCDEF family.

The protein resides in the cytoplasm. It catalyses the reaction UDP-N-acetyl-alpha-D-muramate + L-alanine + ATP = UDP-N-acetyl-alpha-D-muramoyl-L-alanine + ADP + phosphate + H(+). It participates in cell wall biogenesis; peptidoglycan biosynthesis. Cell wall formation. The protein is UDP-N-acetylmuramate--L-alanine ligase of Francisella tularensis subsp. mediasiatica (strain FSC147).